A 486-amino-acid polypeptide reads, in one-letter code: UDP-N-acetylmuramoyl-L-alanyl-D-glutamate--2,6-diaminopimelate ligase (486 aa).

A UDP-N-acetyl-alpha-D-muramoyl-L-alanyl-D-glutamate-binding site is contributed by Ser-31. Position 109–115 (109–115 (GTNGKTT)) interacts with ATP. Residues Asn-150, 151 to 152 (TT), Ser-178, and Arg-186 contribute to the UDP-N-acetyl-alpha-D-muramoyl-L-alanyl-D-glutamate site. Lys-218 is subject to N6-carboxylysine. Meso-2,6-diaminopimelate is bound by residues Arg-381, 405–408 (DNPR), Gly-455, and Glu-459. The Meso-diaminopimelate recognition motif signature appears at 405-408 (DNPR).

Belongs to the MurCDEF family. MurE subfamily. Mg(2+) is required as a cofactor. In terms of processing, carboxylation is probably crucial for Mg(2+) binding and, consequently, for the gamma-phosphate positioning of ATP.

It localises to the cytoplasm. The enzyme catalyses UDP-N-acetyl-alpha-D-muramoyl-L-alanyl-D-glutamate + meso-2,6-diaminopimelate + ATP = UDP-N-acetyl-alpha-D-muramoyl-L-alanyl-gamma-D-glutamyl-meso-2,6-diaminopimelate + ADP + phosphate + H(+). It participates in cell wall biogenesis; peptidoglycan biosynthesis. Functionally, catalyzes the addition of meso-diaminopimelic acid to the nucleotide precursor UDP-N-acetylmuramoyl-L-alanyl-D-glutamate (UMAG) in the biosynthesis of bacterial cell-wall peptidoglycan. The sequence is that of UDP-N-acetylmuramoyl-L-alanyl-D-glutamate--2,6-diaminopimelate ligase from Halalkalibacterium halodurans (strain ATCC BAA-125 / DSM 18197 / FERM 7344 / JCM 9153 / C-125) (Bacillus halodurans).